We begin with the raw amino-acid sequence, 474 residues long: SHC-transforming protein 3 (474 aa).

The interval 1-27 is disordered; that stretch reads MSATRKSRAGDEPLPRPPRGAPHTSDQ. Residues 29-214 enclose the PID domain; the sequence is LGPGVTYVVK…LDEPWTEEEG (186 aa). Positions 215–378 are CH1; sequence DGPDHPYYNS…RMLEELNAEP (164 aa). S282 is modified (phosphoserine). The disordered stretch occupies residues 308–328; it reads QPVPPQVWPAATSSTESSPRK. The 92-residue stretch at 379 to 470 folds into the SH2 domain; that stretch reads WYQGEMSRKE…GSELCLQQPV (92 aa).

In terms of assembly, interacts with the Trk receptors in a phosphotyrosine-dependent manner. Once activated, binds to GRB2. Interacts with activated EGF receptors. Post-translationally, tyrosine phosphorylated. Predominantly expressed in the adult brain.

Functionally, signaling adapter that couples activated growth factor receptors to signaling pathway in neurons. Involved in the signal transduction pathways of neurotrophin-activated Trk receptors in cortical neurons. In Mus musculus (Mouse), this protein is SHC-transforming protein 3 (Shc3).